The primary structure comprises 794 residues: Furin (794 aa).

The first 26 residues, 1 to 26 (MELRPWLLWVVAATGTLVLLAADAQG), serve as a signal peptide directing secretion. Residues 27–107 (QKVFTNTWAV…QQVAKRRTKR (81 aa)) constitute a propeptide, inhibition peptide. The Lumenal segment spans residues 108–715 (DVYQEPTDPK…AGLLPSHLPE (608 aa)). Aspartate 115 is a binding site for Ca(2+). The Peptidase S8 domain occupies 121 to 435 (QWYLSGVTQR…YGLLDAGAMV (315 aa)). The active-site Charge relay system is the aspartate 153. Aspartate 154 contributes to the substrate binding site. Ca(2+)-binding residues include aspartate 162, aspartate 174, aspartate 179, and aspartate 181. The interval 162 to 183 (DLAGNYDPGASFDVNDQDPDPQ) is disordered. 191 to 192 (DN) provides a ligand contact to substrate. The Charge relay system role is filled by histidine 194. Ca(2+) contacts are provided by valine 205, asparagine 208, valine 210, and glycine 212. 2 disulfides stabilise this stretch: cysteine 211/cysteine 360 and cysteine 303/cysteine 333. Substrate-binding positions include glutamate 236, 253–258 (SWGPED), aspartate 264, and 292–295 (ASGN). Aspartate 258 is a Ca(2+) binding site. Aspartate 301 provides a ligand contact to Ca(2+). Aspartate 306 and tyrosine 308 together coordinate substrate. Position 331 (glutamate 331) interacts with Ca(2+). The Charge relay system role is filled by serine 368. A substrate-binding site is contributed by serine 368. Asparagine 387 and asparagine 440 each carry an N-linked (GlcNAc...) asparagine glycan. In terms of domain architecture, P/Homo B spans 444–576 (VAPQRKCIID…TLVLYGTAPE (133 aa)). Cysteine 450 and cysteine 474 form a disulfide bridge. Residues 498–500 (RGD) carry the Cell attachment site motif. A glycan (N-linked (GlcNAc...) asparagine) is linked at asparagine 553. FU repeat units lie at residues 577–620 (GLPV…GFAP) and 638–681 (ASVC…QSQS). The segment at 673–696 (QTCSRQSQSSRESPPQQQPPRLPP) is disordered. Low complexity predominate over residues 676-687 (SRQSQSSRESPP). The helical transmembrane segment at 716-738 (VVAGLSCAFIVLVFVTVFLVLQL) threads the bilayer. Residues 739-794 (RSGFSFRGVKVYTMDRGLISYKGLPPEAWQEECPSDSEEDEGRGERTAFIKDQSAL) lie on the Cytoplasmic side of the membrane. Residues 759–762 (YKGL) form a cell surface signal region. The segment covering 767–780 (WQEECPSDSEEDEG) has biased composition (acidic residues). Positions 767 to 794 (WQEECPSDSEEDEGRGERTAFIKDQSAL) are disordered. Serine 773 and serine 775 each carry phosphoserine; by CK2. A Trans Golgi network signal motif is present at residues 773–779 (SDSEEDE).

The protein belongs to the peptidase S8 family. Furin subfamily. As to quaternary structure, interacts with FLNA. Binds to PACS1 which mediates TGN localization and connection to clathrin adapters. Interacts with LAMP1, LAMP2 and LAMP3. Requires Ca(2+) as cofactor. Post-translationally, the inhibition peptide, which plays the role of an intramolecular chaperone, is autocatalytically removed in the endoplasmic reticulum (ER) and remains non-covalently bound to furin as a potent autoinhibitor. Following transport to the trans Golgi, a second cleavage within the inhibition propeptide results in propeptide dissociation and furin activation. Phosphorylation is required for TGN localization of the endoprotease. In vivo, exists as di-, mono- and non-phosphorylated forms. Seems to be expressed ubiquitously.

Its subcellular location is the golgi apparatus. It localises to the trans-Golgi network membrane. The protein localises to the cell membrane. It is found in the secreted. The protein resides in the endosome membrane. The enzyme catalyses Release of mature proteins from their proproteins by cleavage of -Arg-Xaa-Yaa-Arg-|-Zaa- bonds, where Xaa can be any amino acid and Yaa is Arg or Lys. Releases albumin, complement component C3 and von Willebrand factor from their respective precursors.. Inhibited by the not secondly cleaved propeptide. Inhibited by m-guanidinomethyl-phenylacetyl-Arg-Val-Arg-(amidomethyl)-benzamidine (m-guanidinomethyl-Phac-RVR-Amb) and 4-guanidinomethyl-phenylacetyl-Arg-Tle-Arg-4-amidinobenzylamide (MI-1148). Inhibited by Decanoyl-Arg-Val-Lys-Arg-chloromethylketone (decanoyl-RVKR-CMK). Inhibited by heparin/heparan sulfate-binding. Ubiquitous endoprotease within constitutive secretory pathways capable of cleavage at the RX(K/R)R consensus motif. Mediates processing of TGFB1, an essential step in TGF-beta-1 activation. Converts through proteolytic cleavage the non-functional Brain natriuretic factor prohormone into its active hormone BNP(1-32). By mediating processing of accessory subunit ATP6AP1/Ac45 of the V-ATPase, regulates the acidification of dense-core secretory granules in islets of Langerhans cells. In terms of biological role, (Microbial infection) Cleaves and activates diphtheria toxin DT. Functionally, (Microbial infection) Cleaves and activates anthrax toxin protective antigen (PA). Its function is as follows. (Microbial infection) Cleaves and activates HIV-1 virus Envelope glycoprotein gp160. (Microbial infection) Required for H7N1 and H5N1 influenza virus infection probably by cleaving hemagglutinin. In terms of biological role, (Microbial infection) Able to cleave S.pneumoniae serine-rich repeat protein PsrP. Functionally, (Microbial infection) Facilitates human coronaviruses EMC and SARS-CoV-2 infections by proteolytically cleaving the spike protein at the monobasic S1/S2 cleavage site. This cleavage is essential for spike protein-mediated cell-cell fusion and entry into human lung cells. Its function is as follows. (Microbial infection) Facilitates mumps virus infection by proteolytically cleaving the viral fusion protein F. The protein is Furin of Homo sapiens (Human).